The chain runs to 816 residues: MSSSSAASIGPPQPPPPPAPPEEEKKCLNSELWHACAGPLVCLPTVGTRVVYFPQGHSEQVAASTNKEVEGHIPNYPNLPAQLICQLHDVTMHADVETDEVYAQMTLQPLNPQEQNDAYLPAEMGIMSKQPTNYFCKTLTASDTSTHGGFSVPRRAAERVFPPLDFTQQPPAQELIARDIHDIEWKFRHIFRGQPKRHLLTTGWSVFVSAKRLVAGDSVLFIWNEKNQLLLGIRRASRPQTVMPSSVLSSDSMHIGLLAAAAHAAATNSRFTIFYNPRASPSEFVIPLSKYIKAVFHTRISVGMRFRMLFETEESSVRRYMGTITEVSDADPVRWPSSYWRSVKVGWDESTAGERPPRVSLWEIEPLTTFPMYPSLFPLRVKHPWYSGVASLHDDSNALMWLRGVAGEGGFQSLNFQSPGIGSWGQQRLHPSLLSSDHDQYQAVVAAAAASQSGGYLKQQFLHLQQPMQSPQEHCNLNPLLQQQILQQASQQQIINPDAQNIQTMLSPSAIQQQLQQLQQMQQVQNDQKQKIQPDQSYQVPTSAVLPSPTSLPSHLREKFGFSDPNANSSSFITSSSSDNMLDSSFLQGSSKAVDLSRFNQPVASEQQQQQAWKQKFMGSQSVSFGGSVLHNSPTSKDGSVENKIGRDVQNQSLFSPQVDSSSLLYNMVPNLTSNVSDGNLSTIPSGSTYLQNAMYGCLDDSSGLLQNTGENDPATRTFVKVYKSGSVGRSLDITRFSNYAELREELGQMFGIKGQLDDPDRSGWQLVFVDRENDVLLLGDDPWESFVNSVWYIKILSPEDVHKMGKQGNDPRYLS.

Low complexity predominate over residues 1 to 10 (MSSSSAASIG). A disordered region spans residues 1–24 (MSSSSAASIGPPQPPPPPAPPEEE). Pro residues predominate over residues 11–20 (PPQPPPPPAP). The segment at residues 135-237 (FCKTLTASDT…QLLLGIRRAS (103 aa)) is a DNA-binding region (TF-B3). The segment at 526–565 (NDQKQKIQPDQSYQVPTSAVLPSPTSLPSHLREKFGFSDP) is disordered. The PB1 domain occupies 717–801 (RTFVKVYKSG…WYIKILSPED (85 aa)).

This sequence belongs to the ARF family. As to quaternary structure, homodimers and heterodimers.

The protein resides in the nucleus. In terms of biological role, auxin response factors (ARFs) are transcriptional factors that bind specifically to the DNA sequence 5'-TGTCTC-3' found in the auxin-responsive promoter elements (AuxREs). The sequence is that of Auxin response factor 12 (ARF12) from Oryza sativa subsp. indica (Rice).